We begin with the raw amino-acid sequence, 250 residues long: MTTLIISDLHLDPLRPVVTELFLRFLREQVSGADALYILGDLFEIWIGDDMPSEVADMVVAALRTHADAGTPLYFMPGNRDFLVGADYAARAGFRILPDPCVVDLYGEPTLLLHGDLLCTDDIAYQAFRAQTRDPEFIAQFLTQTLSARLAFAQQARLASHAHQSGLKQENDSTQFEKITDVVPADVAAMFACYGVNRMIHGHTHRPALHMLQVAECACTRVVLGDWYQQGSVLCVDADGLVLEQLLLPG.

The Mn(2+) site is built by D8, H10, D41, N79, and H114. 79 to 80 (NR) serves as a coordination point for substrate. Substrate contacts are provided by D122, S160, D172, Q175, and H203. Mn(2+)-binding residues include H203 and H205.

It belongs to the LpxH family. It depends on Mn(2+) as a cofactor.

It localises to the cell inner membrane. It catalyses the reaction UDP-2-N,3-O-bis[(3R)-3-hydroxytetradecanoyl]-alpha-D-glucosamine + H2O = 2-N,3-O-bis[(3R)-3-hydroxytetradecanoyl]-alpha-D-glucosaminyl 1-phosphate + UMP + 2 H(+). It functions in the pathway glycolipid biosynthesis; lipid IV(A) biosynthesis; lipid IV(A) from (3R)-3-hydroxytetradecanoyl-[acyl-carrier-protein] and UDP-N-acetyl-alpha-D-glucosamine: step 4/6. Hydrolyzes the pyrophosphate bond of UDP-2,3-diacylglucosamine to yield 2,3-diacylglucosamine 1-phosphate (lipid X) and UMP by catalyzing the attack of water at the alpha-P atom. Involved in the biosynthesis of lipid A, a phosphorylated glycolipid that anchors the lipopolysaccharide to the outer membrane of the cell. The chain is UDP-2,3-diacylglucosamine hydrolase from Xylella fastidiosa (strain M23).